Reading from the N-terminus, the 426-residue chain is Glucose-6-phosphate isomerase (426 aa).

The Proton donor role is filled by Glu282. Catalysis depends on residues His303 and Lys419.

It belongs to the GPI family.

It is found in the cytoplasm. It catalyses the reaction alpha-D-glucose 6-phosphate = beta-D-fructose 6-phosphate. It functions in the pathway carbohydrate biosynthesis; gluconeogenesis. The protein operates within carbohydrate degradation; glycolysis; D-glyceraldehyde 3-phosphate and glycerone phosphate from D-glucose: step 2/4. Functionally, catalyzes the reversible isomerization of glucose-6-phosphate to fructose-6-phosphate. The sequence is that of Glucose-6-phosphate isomerase from Mycoplasmoides gallisepticum (strain R(low / passage 15 / clone 2)) (Mycoplasma gallisepticum).